A 172-amino-acid polypeptide reads, in one-letter code: Shikimate kinase (172 aa).

ATP is bound at residue G14–T19. S18 is a binding site for Mg(2+). Substrate is bound by residues D36, R60, and G82. R120 contributes to the ATP binding site. R140 provides a ligand contact to substrate.

Belongs to the shikimate kinase family. Monomer. Mg(2+) serves as cofactor.

Its subcellular location is the cytoplasm. It catalyses the reaction shikimate + ATP = 3-phosphoshikimate + ADP + H(+). The protein operates within metabolic intermediate biosynthesis; chorismate biosynthesis; chorismate from D-erythrose 4-phosphate and phosphoenolpyruvate: step 5/7. Its function is as follows. Catalyzes the specific phosphorylation of the 3-hydroxyl group of shikimic acid using ATP as a cosubstrate. The protein is Shikimate kinase of Tolumonas auensis (strain DSM 9187 / NBRC 110442 / TA 4).